The following is a 396-amino-acid chain: Stearoyl-[acyl-carrier-protein] 9-desaturase 2, chloroplastic (396 aa).

The transit peptide at 1-32 (MALRPNDVTLRLTPPLAAAARRNRRAAAGGVR) directs the protein to the chloroplast. Fe cation-binding residues include Glu138, Glu176, His179, Glu229, Glu262, and His265.

The protein belongs to the fatty acid desaturase type 2 family. In terms of assembly, homodimer. The cofactor is Fe(2+).

The protein localises to the plastid. It is found in the chloroplast. The catalysed reaction is octadecanoyl-[ACP] + 2 reduced [2Fe-2S]-[ferredoxin] + O2 + 2 H(+) = (9Z)-octadecenoyl-[ACP] + 2 oxidized [2Fe-2S]-[ferredoxin] + 2 H2O. It participates in lipid metabolism; fatty acid metabolism. Converts stearoyl-ACP to oleoyl-ACP by introduction of a cis double bond between carbons 9 and 10 of the acyl chain. Required for the repression of the salicylic acid (SA) signaling pathway. The polypeptide is Stearoyl-[acyl-carrier-protein] 9-desaturase 2, chloroplastic (SSI2) (Oryza sativa subsp. indica (Rice)).